Consider the following 358-residue polypeptide: Plancitoxin-1 (358 aa).

Positions 1–26 (MPSSVIMFTFLALTVLTAVMVGTSEA) are cleaved as a signal peptide. A glycan (N-linked (GlcNAc...) asparagine) is linked at Asn-274. His-303 is a catalytic residue.

The protein belongs to the DNase II family. Plancitoxin is a heterodimer of alpha and beta subunits; disulfide-linked by a single disulfide bond. In terms of tissue distribution, venom gland.

The protein resides in the secreted. It carries out the reaction Endonucleolytic cleavage to nucleoside 3'-phosphates and 3'-phosphooligonucleotide end-products.. Its function is as follows. Hydrolyzes DNA with an optimum pH of 7.2. Is potently hepatotoxic. It induces caspase-independent apoptosis (on rat liver cells) through the following procedure: binding to a specific receptor in the cytoplasmic membrane, entering the cell, entering the nucleus and degrading DNA. This chain is Plancitoxin-1, found in Acanthaster planci (Crown-of-thorns starfish).